A 386-amino-acid chain; its full sequence is Protein-glutamate methylesterase/protein-glutamine glutaminase (386 aa).

Residues lysine 4–threonine 121 form the Response regulatory domain. Aspartate 55 carries the post-translational modification 4-aspartylphosphate. The tract at residues proline 133–leucine 161 is disordered. The 195-residue stretch at isoleucine 190 to serine 384 folds into the CheB-type methylesterase domain. Residues serine 202, histidine 229, and aspartate 326 contribute to the active site.

Belongs to the CheB family. Phosphorylated by CheA. Phosphorylation of the N-terminal regulatory domain activates the methylesterase activity.

It localises to the cytoplasm. It catalyses the reaction [protein]-L-glutamate 5-O-methyl ester + H2O = L-glutamyl-[protein] + methanol + H(+). The enzyme catalyses L-glutaminyl-[protein] + H2O = L-glutamyl-[protein] + NH4(+). Involved in chemotaxis. Part of a chemotaxis signal transduction system that modulates chemotaxis in response to various stimuli. Catalyzes the demethylation of specific methylglutamate residues introduced into the chemoreceptors (methyl-accepting chemotaxis proteins or MCP) by CheR. Also mediates the irreversible deamidation of specific glutamine residues to glutamic acid. The protein is Protein-glutamate methylesterase/protein-glutamine glutaminase of Idiomarina loihiensis (strain ATCC BAA-735 / DSM 15497 / L2-TR).